The chain runs to 849 residues: DNA mismatch repair protein MutS (849 aa).

602–609 contacts ATP; the sequence is GPNMSGKS.

It belongs to the DNA mismatch repair MutS family.

Its function is as follows. This protein is involved in the repair of mismatches in DNA. It is possible that it carries out the mismatch recognition step. This protein has a weak ATPase activity. The sequence is that of DNA mismatch repair protein MutS from Streptococcus mutans serotype c (strain ATCC 700610 / UA159).